Here is a 239-residue protein sequence, read N- to C-terminus: Sugar fermentation stimulation protein homolog (239 aa).

The protein belongs to the SfsA family.

In Cyanothece sp. (strain PCC 7425 / ATCC 29141), this protein is Sugar fermentation stimulation protein homolog.